The sequence spans 311 residues: HPr kinase/phosphorylase (311 aa).

Catalysis depends on residues histidine 138 and lysine 159. ATP is bound at residue 153-160; the sequence is GKSGVGKS. Serine 160 is a binding site for Mg(2+). Aspartate 177 functions as the Proton acceptor; for phosphorylation activity. Proton donor; for dephosphorylation activity in the catalytic mechanism. The interval 201–210 is important for the catalytic mechanism of both phosphorylation and dephosphorylation; sequence LEIRGLGIIN. Glutamate 202 serves as a coordination point for Mg(2+). The active site involves arginine 243. The important for the catalytic mechanism of dephosphorylation stretch occupies residues 264–269; it reads PVRPGR.

This sequence belongs to the HPrK/P family. In terms of assembly, homohexamer. Mg(2+) is required as a cofactor.

It carries out the reaction [HPr protein]-L-serine + ATP = [HPr protein]-O-phospho-L-serine + ADP + H(+). The catalysed reaction is [HPr protein]-O-phospho-L-serine + phosphate + H(+) = [HPr protein]-L-serine + diphosphate. Catalyzes the ATP- as well as the pyrophosphate-dependent phosphorylation of a specific serine residue in HPr, a phosphocarrier protein of the phosphoenolpyruvate-dependent sugar phosphotransferase system (PTS). HprK/P also catalyzes the pyrophosphate-producing, inorganic phosphate-dependent dephosphorylation (phosphorolysis) of seryl-phosphorylated HPr (P-Ser-HPr). The two antagonistic activities of HprK/P are regulated by several intracellular metabolites, which change their concentration in response to the absence or presence of rapidly metabolisable carbon sources (glucose, fructose, etc.) in the growth medium. Also phosphorylates/dephosphorylates the HPr-like catabolite repression protein crh on a specific serine residue. Therefore, by controlling the phosphorylation state of HPr and crh, HPrK/P is a sensor enzyme that plays a major role in the regulation of carbon metabolism and sugar transport: it mediates carbon catabolite repression (CCR), and regulates PTS-catalyzed carbohydrate uptake and inducer exclusion. This Geobacillus sp. (strain WCH70) protein is HPr kinase/phosphorylase.